The chain runs to 249 residues: 2,3-bisphosphoglycerate-dependent phosphoglycerate mutase (249 aa).

Substrate is bound by residues 8 to 15, 21 to 22, Arg-60, 87 to 90, Lys-98, 114 to 115, and 183 to 184; these read RHGESAWN, TG, ERHY, RR, and GN. His-9 functions as the Tele-phosphohistidine intermediate in the catalytic mechanism. The active-site Proton donor/acceptor is the Glu-87.

This sequence belongs to the phosphoglycerate mutase family. BPG-dependent PGAM subfamily.

The catalysed reaction is (2R)-2-phosphoglycerate = (2R)-3-phosphoglycerate. Its pathway is carbohydrate degradation; glycolysis; pyruvate from D-glyceraldehyde 3-phosphate: step 3/5. In terms of biological role, catalyzes the interconversion of 2-phosphoglycerate and 3-phosphoglycerate. The polypeptide is 2,3-bisphosphoglycerate-dependent phosphoglycerate mutase (Methanosphaerula palustris (strain ATCC BAA-1556 / DSM 19958 / E1-9c)).